The primary structure comprises 53 residues: Photosystem II reaction center protein K (53 aa).

Residues 1-16 (MLKFYLENVFHLIFFA) constitute a propeptide that is removed on maturation. The chain crosses the membrane as a helical span at residues 28-48 (IVNVMPIIPLFFFLLAFVWQA).

This sequence belongs to the PsbK family. PSII is composed of 1 copy each of membrane proteins PsbA, PsbB, PsbC, PsbD, PsbE, PsbF, PsbH, PsbI, PsbJ, PsbK, PsbL, PsbM, PsbT, PsbX, PsbY, PsbZ, Psb30/Ycf12, at least 3 peripheral proteins of the oxygen-evolving complex and a large number of cofactors. It forms dimeric complexes.

The protein resides in the plastid. It is found in the chloroplast thylakoid membrane. Functionally, one of the components of the core complex of photosystem II (PSII). PSII is a light-driven water:plastoquinone oxidoreductase that uses light energy to abstract electrons from H(2)O, generating O(2) and a proton gradient subsequently used for ATP formation. It consists of a core antenna complex that captures photons, and an electron transfer chain that converts photonic excitation into a charge separation. The chain is Photosystem II reaction center protein K from Huperzia lucidula (Shining clubmoss).